Here is a 336-residue protein sequence, read N- to C-terminus: Holliday junction branch migration complex subunit RuvB (336 aa).

Positions 1 to 175 are large ATPase domain (RuvB-L); sequence MEKYSFESVQ…FGMSFRLQFY (175 aa). ATP-binding positions include Leu14, Arg15, Gly56, Lys59, Thr60, Thr61, 122 to 124, Arg165, Tyr175, and Arg212; that span reads EDF. Thr60 contacts Mg(2+). A small ATPAse domain (RuvB-S) region spans residues 176 to 253; sequence EPKELSAIVI…CVRYALNELG (78 aa). The head domain (RuvB-H) stretch occupies residues 256-336; it reads ELGFDELDLR…IPFLEQKGLF (81 aa). Residues Arg310 and Arg315 each contribute to the DNA site.

This sequence belongs to the RuvB family. Homohexamer. Forms an RuvA(8)-RuvB(12)-Holliday junction (HJ) complex. HJ DNA is sandwiched between 2 RuvA tetramers; dsDNA enters through RuvA and exits via RuvB. An RuvB hexamer assembles on each DNA strand where it exits the tetramer. Each RuvB hexamer is contacted by two RuvA subunits (via domain III) on 2 adjacent RuvB subunits; this complex drives branch migration. In the full resolvosome a probable DNA-RuvA(4)-RuvB(12)-RuvC(2) complex forms which resolves the HJ.

The protein resides in the cytoplasm. It carries out the reaction ATP + H2O = ADP + phosphate + H(+). Its function is as follows. The RuvA-RuvB-RuvC complex processes Holliday junction (HJ) DNA during genetic recombination and DNA repair, while the RuvA-RuvB complex plays an important role in the rescue of blocked DNA replication forks via replication fork reversal (RFR). RuvA specifically binds to HJ cruciform DNA, conferring on it an open structure. The RuvB hexamer acts as an ATP-dependent pump, pulling dsDNA into and through the RuvAB complex. RuvB forms 2 homohexamers on either side of HJ DNA bound by 1 or 2 RuvA tetramers; 4 subunits per hexamer contact DNA at a time. Coordinated motions by a converter formed by DNA-disengaged RuvB subunits stimulates ATP hydrolysis and nucleotide exchange. Immobilization of the converter enables RuvB to convert the ATP-contained energy into a lever motion, pulling 2 nucleotides of DNA out of the RuvA tetramer per ATP hydrolyzed, thus driving DNA branch migration. The RuvB motors rotate together with the DNA substrate, which together with the progressing nucleotide cycle form the mechanistic basis for DNA recombination by continuous HJ branch migration. Branch migration allows RuvC to scan DNA until it finds its consensus sequence, where it cleaves and resolves cruciform DNA. This chain is Holliday junction branch migration complex subunit RuvB, found in Helicobacter hepaticus (strain ATCC 51449 / 3B1).